The sequence spans 636 residues: Chaperone protein HtpG (636 aa).

Positions 1–342 (MSGETLEFQA…AHDLSLNISR (342 aa)) are a; substrate-binding. The interval 343 to 558 (ELLQQDRQIQ…AHDVTPTLEK (216 aa)) is b. Residues 559-636 (MYRAMGHEVP…ILAERLARTL (78 aa)) are c.

It belongs to the heat shock protein 90 family. Homodimer.

The protein resides in the cytoplasm. In terms of biological role, molecular chaperone. Has ATPase activity. This chain is Chaperone protein HtpG, found in Salinispora arenicola (strain CNS-205).